Reading from the N-terminus, the 1364-residue chain is ABC-type transporter cns4 (1364 aa).

The 249-residue stretch at 42 to 290 (SRVKESRAKP…MEEMGFLYTD (249 aa)) folds into the ABC transporter 1 domain. 2 N-linked (GlcNAc...) asparagine glycosylation sites follow: N152 and N214. The next 5 membrane-spanning stretches (helical) occupy residues 435–455 (LFFA…GSFA), 483–503 (IPLI…MTGL), 508–528 (EAFL…TALF), 540–560 (AAIK…GFLI), and 567–587 (PWLG…AVLS). A glycan (N-linked (GlcNAc...) asparagine) is linked at N610. A helical transmembrane segment spans residues 650–670 (FAIVWVWWALFVILTVYFTSN). N689, N711, and N739 each carry an N-linked (GlcNAc...) asparagine glycan. Residues 697 to 732 (DEEVGSGPDSHDSRNRSGISPIGDKQETSTDGPSKI) are disordered. The 249-residue stretch at 737-985 (IRNTSVFTWK…TVNEYFGRNG (249 aa)) folds into the ABC transporter 2 domain. 779 to 786 (GSSGAGKT) provides a ligand contact to ATP. Helical transmembrane passes span 1076–1094 (LMLH…WKIG), 1105–1125 (FTIF…QPLF), 1146–1166 (AFAT…AVVY), 1185–1205 (AVFF…QAIA), 1211–1231 (AIFA…FCGV), and 1245–1265 (WLYY…FTTF).

This sequence belongs to the ABC transporter superfamily. ABCG family. PDR (TC 3.A.1.205) subfamily.

The protein localises to the cell membrane. Its function is as follows. ABC-type transporter; part of the gene cluster that mediates the biosynthesis of cordycepin (COR) and pentostatin (PTN), two adenosine analogs with related bioactivity profiles as both mimic adenosine and can inhibit some of the processes that are adenosine dependent. Mediates the pumping of pentostatin but not of cordycepin out of fungal cells. Decreasing intracellular pentostatin releases adenosine deaminase (ADA) inhibition, allowing ADA to deaminate cordycepin into non-toxic 3'-d. This is ABC-type transporter cns4 from Cordyceps militaris (strain CM01) (Caterpillar fungus).